The following is a 517-amino-acid chain: Aldehyde dehydrogenase X, mitochondrial (517 aa).

The transit peptide at 1-17 directs the protein to the mitochondrion; that stretch reads MLRFLAPRLLSLQGRTA. Lysine 51 carries the N6-acetyllysine modification. An N6-acetyllysine; alternate modification is found at lysine 52. At lysine 52 the chain carries N6-succinyllysine; alternate. N6-succinyllysine is present on lysine 81. 262 to 267 is an NAD(+) binding site; the sequence is GSTEVG. Glutamate 285 (proton acceptor) is an active-site residue. Cysteine 319 serves as the catalytic Nucleophile. N6-acetyllysine; alternate is present on residues lysine 364, lysine 383, lysine 399, lysine 414, and lysine 426. N6-succinyllysine; alternate occurs at positions 364, 383, 399, 414, and 426. An N6-acetyllysine modification is found at lysine 429.

It belongs to the aldehyde dehydrogenase family. As to quaternary structure, homotetramer. In terms of tissue distribution, liver, testis and to a lesser extent in brain.

The protein resides in the mitochondrion matrix. The enzyme catalyses an aldehyde + NAD(+) + H2O = a carboxylate + NADH + 2 H(+). It participates in alcohol metabolism; ethanol degradation; acetate from ethanol: step 2/2. Its function is as follows. ALDHs play a major role in the detoxification of alcohol-derived acetaldehyde. They are involved in the metabolism of corticosteroids, biogenic amines, neurotransmitters, and lipid peroxidation. The chain is Aldehyde dehydrogenase X, mitochondrial (ALDH1B1) from Homo sapiens (Human).